The following is a 478-amino-acid chain: ATP synthase subunit beta (478 aa).

Position 160–167 (160–167 (GGAGVGKT)) interacts with ATP.

This sequence belongs to the ATPase alpha/beta chains family. As to quaternary structure, F-type ATPases have 2 components, CF(1) - the catalytic core - and CF(0) - the membrane proton channel. CF(1) has five subunits: alpha(3), beta(3), gamma(1), delta(1), epsilon(1). CF(0) has three main subunits: a(1), b(2) and c(9-12). The alpha and beta chains form an alternating ring which encloses part of the gamma chain. CF(1) is attached to CF(0) by a central stalk formed by the gamma and epsilon chains, while a peripheral stalk is formed by the delta and b chains.

It is found in the cell inner membrane. It carries out the reaction ATP + H2O + 4 H(+)(in) = ADP + phosphate + 5 H(+)(out). Functionally, produces ATP from ADP in the presence of a proton gradient across the membrane. The catalytic sites are hosted primarily by the beta subunits. The polypeptide is ATP synthase subunit beta (Orientia tsutsugamushi (strain Ikeda) (Rickettsia tsutsugamushi)).